The sequence spans 98 residues: NADH-ubiquinone oxidoreductase chain 4L (98 aa).

Transmembrane regions (helical) follow at residues Met1–Val21, Thr29–Thr49, and Leu59–Val79.

Belongs to the complex I subunit 4L family. In terms of assembly, core subunit of respiratory chain NADH dehydrogenase (Complex I) which is composed of 45 different subunits.

The protein localises to the mitochondrion inner membrane. The catalysed reaction is a ubiquinone + NADH + 5 H(+)(in) = a ubiquinol + NAD(+) + 4 H(+)(out). Core subunit of the mitochondrial membrane respiratory chain NADH dehydrogenase (Complex I) which catalyzes electron transfer from NADH through the respiratory chain, using ubiquinone as an electron acceptor. Part of the enzyme membrane arm which is embedded in the lipid bilayer and involved in proton translocation. In Notoryctes typhlops (Southern marsupial mole), this protein is NADH-ubiquinone oxidoreductase chain 4L (MT-ND4L).